The sequence spans 159 residues: Endoribonuclease YbeY (159 aa).

Zn(2+)-binding residues include histidine 125, histidine 129, and histidine 135.

The protein belongs to the endoribonuclease YbeY family. It depends on Zn(2+) as a cofactor.

The protein resides in the cytoplasm. Its function is as follows. Single strand-specific metallo-endoribonuclease involved in late-stage 70S ribosome quality control and in maturation of the 3' terminus of the 16S rRNA. The sequence is that of Endoribonuclease YbeY from Brevibacillus brevis (strain 47 / JCM 6285 / NBRC 100599).